The sequence spans 248 residues: Ras-related protein Rab-28 (248 aa).

The tract at residues 1–30 (MTTMGEDEAPALPKKSPLPEKIDEADVDDD) is disordered. 42–50 (GDGASGKTS) is a GTP binding site. The Effector region motif lies at 64-72 (YHQTLGLDF). GTP-binding positions include 91 to 95 (DIGGQ), 152 to 155 (NKTD), and 182 to 184 (SAK). Residues 227–248 (QSDASYARRSDQSRSTSVCSIT) are disordered. Polar residues predominate over residues 239–248 (SRSTSVCSIT).

Belongs to the small GTPase superfamily. Rab family. Expressed in amphid and phasmid ciliated sensory neurons.

It localises to the cell projection. The protein resides in the cilium membrane. Its subcellular location is the perikaryon. The protein localises to the cytoplasm. It is found in the cytoskeleton. It localises to the cilium axoneme. Its function is as follows. GTPase. Intraflagellar transport (IFT) cargo that undergoes bidirectional IFT along the ciliary axoneme when in active GTP-bound state in amphid and phasmid ciliated sensory neurons. Targeting and function as IFT cargo may depend on the BBSome, an IFT cargo adapter. Does not undergo IFT when in inactive GDP-bound state. May in turn play a role in cilium structure and/or function in ciliated sensory neurons. This chain is Ras-related protein Rab-28, found in Caenorhabditis elegans.